Reading from the N-terminus, the 171-residue chain is Lipoprotein signal peptidase (171 aa).

Helical transmembrane passes span 7-27 (GLLA…GLYF), 64-84 (IGRW…GLWM), and 88-108 (TSRL…GNAI). Active-site residues include D118 and D136. The helical transmembrane segment at 128 to 148 (SWYVFNVADAAIVAGVIGLIL) threads the bilayer.

This sequence belongs to the peptidase A8 family.

It localises to the cell inner membrane. The enzyme catalyses Release of signal peptides from bacterial membrane prolipoproteins. Hydrolyzes -Xaa-Yaa-Zaa-|-(S,diacylglyceryl)Cys-, in which Xaa is hydrophobic (preferably Leu), and Yaa (Ala or Ser) and Zaa (Gly or Ala) have small, neutral side chains.. Its pathway is protein modification; lipoprotein biosynthesis (signal peptide cleavage). Functionally, this protein specifically catalyzes the removal of signal peptides from prolipoproteins. The protein is Lipoprotein signal peptidase of Methylobacterium radiotolerans (strain ATCC 27329 / DSM 1819 / JCM 2831 / NBRC 15690 / NCIMB 10815 / 0-1).